Reading from the N-terminus, the 167-residue chain is Male-specific protein scotti (167 aa).

Asn30, Asn124, and Asn148 each carry an N-linked (GlcNAc...) asparagine glycan.

This sequence belongs to the male-specific scotti family.

Post-meiotically transcribed gene that has a role in late spermiogenesis; required for actin cone progression during spermatid individualization. The protein is Male-specific protein scotti of Drosophila ananassae (Fruit fly).